The following is a 336-amino-acid chain: Biotin synthase (336 aa).

A Radical SAM core domain is found at 55 to 282; sequence NRVQLSKLLN…QSHVRLTAGR (228 aa). 3 residues coordinate [4Fe-4S] cluster: Cys70, Cys74, and Cys77. [2Fe-2S] cluster-binding residues include Cys114, Cys145, Cys205, and Arg277.

This sequence belongs to the radical SAM superfamily. Biotin synthase family. As to quaternary structure, homodimer. [4Fe-4S] cluster is required as a cofactor. [2Fe-2S] cluster serves as cofactor.

It catalyses the reaction (4R,5S)-dethiobiotin + (sulfur carrier)-SH + 2 reduced [2Fe-2S]-[ferredoxin] + 2 S-adenosyl-L-methionine = (sulfur carrier)-H + biotin + 2 5'-deoxyadenosine + 2 L-methionine + 2 oxidized [2Fe-2S]-[ferredoxin]. It participates in cofactor biosynthesis; biotin biosynthesis; biotin from 7,8-diaminononanoate: step 2/2. Functionally, catalyzes the conversion of dethiobiotin (DTB) to biotin by the insertion of a sulfur atom into dethiobiotin via a radical-based mechanism. The sequence is that of Biotin synthase from Brucella anthropi (strain ATCC 49188 / DSM 6882 / CCUG 24695 / JCM 21032 / LMG 3331 / NBRC 15819 / NCTC 12168 / Alc 37) (Ochrobactrum anthropi).